Here is a 352-residue protein sequence, read N- to C-terminus: Transcriptional regulatory protein AlgP (352 aa).

Residues 128-352 (KALESRKAKP…SNGAAPTSAS (225 aa)) form a disordered region. The segment covering 138–341 (ATKPAAKAAA…SSAASATPAA (204 aa)) has biased composition (low complexity).

In terms of biological role, the promoter for a critical alginate biosynthetic gene, AlgD, encoding GDP-mannose dehydrogenase, is activated only under conditions reminiscent of the cystic fibrosis lung (i.e. under high osmolarity), and at least two regulatory genes, AlgP and AlgQ, have been implicated in this activation process. The chain is Transcriptional regulatory protein AlgP (algP) from Pseudomonas aeruginosa (strain ATCC 15692 / DSM 22644 / CIP 104116 / JCM 14847 / LMG 12228 / 1C / PRS 101 / PAO1).